The sequence spans 137 residues: Large ribosomal subunit protein eL32 (137 aa).

The interval P95 to S137 is disordered. The segment covering R123–S137 has biased composition (basic residues).

Belongs to the eukaryotic ribosomal protein eL32 family.

This is Large ribosomal subunit protein eL32 (rpl32) from Trichoderma harzianum (Hypocrea lixii).